The primary structure comprises 258 residues: Putative L-lactate dehydrogenase operon regulatory protein (258 aa).

The HTH gntR-type domain occupies 6–74 (RRLSDEVADR…RGGGTFIRWR (69 aa)). A DNA-binding region (H-T-H motif) is located at residues 34-53 (ERQLAMQLGVSRNSLREALA).

May be a regulatory protein for the LCT genes. The sequence is that of Putative L-lactate dehydrogenase operon regulatory protein (lldR) from Escherichia coli (strain K12).